The primary structure comprises 160 residues: SsrA-binding protein (160 aa).

Residues 132–160 (KEFDKRDTMRERDSNRELQRAVRNKGKEE) form a disordered region.

This sequence belongs to the SmpB family.

The protein resides in the cytoplasm. Its function is as follows. Required for rescue of stalled ribosomes mediated by trans-translation. Binds to transfer-messenger RNA (tmRNA), required for stable association of tmRNA with ribosomes. tmRNA and SmpB together mimic tRNA shape, replacing the anticodon stem-loop with SmpB. tmRNA is encoded by the ssrA gene; the 2 termini fold to resemble tRNA(Ala) and it encodes a 'tag peptide', a short internal open reading frame. During trans-translation Ala-aminoacylated tmRNA acts like a tRNA, entering the A-site of stalled ribosomes, displacing the stalled mRNA. The ribosome then switches to translate the ORF on the tmRNA; the nascent peptide is terminated with the 'tag peptide' encoded by the tmRNA and targeted for degradation. The ribosome is freed to recommence translation, which seems to be the essential function of trans-translation. In Pseudomonas putida (strain ATCC 47054 / DSM 6125 / CFBP 8728 / NCIMB 11950 / KT2440), this protein is SsrA-binding protein.